We begin with the raw amino-acid sequence, 124 residues long: Protein BEX3 (124 aa).

Positions 1 to 56 are disordered; it reads MANVHQENEEMEQPLQNGQEDRPVGGGEGHQPAANNNNNNHNHNHNHHRRGQARRL. Over residues 42-53 the composition is skewed to basic residues; that stretch reads NHNHNHHRRGQA. Residues 81 to 106 are interaction with p75NTR/NGFR; sequence EMFMEEMREIRRKLRELQLRNCLRIL. The tract at residues 81-124 is interaction with 14-3-3 epsilon; sequence EMFMEEMREIRRKLRELQLRNCLRILMGELSNHHDHHDEFCLMP. The Nuclear export signal motif lies at 90–100; the sequence is IRRKLRELQLR. The his cluster stretch occupies residues 113–117; that stretch reads HHDHH. Cys-121 contacts Zn(2+).

This sequence belongs to the BEX family. Self-associates. Binds to the DEATH domain of p75NTR/NGFR. Interacts with 14-3-3 epsilon (YWHAE). Interacts with DIABLO/SMAC. In terms of processing, ubiquitinated. Degraded by the proteasome. Widely expressed.

The protein localises to the nucleus. The protein resides in the cytoplasm. It is found in the cytosol. Its function is as follows. May be a signaling adapter molecule involved in NGFR/p75NTR-mediated apoptosis induced by NGF. Plays a role in zinc-triggered neuronal death. In absence of reductive stress, acts as a pseudosubstrate for the CRL2(FEM1B) complex: associates with FEM1B via zinc, thereby preventing association between FEM1B and its substrates. The sequence is that of Protein BEX3 from Mus musculus (Mouse).